Reading from the N-terminus, the 165-residue chain is NADH-ubiquinone oxidoreductase chain 6 (165 aa).

4 consecutive transmembrane segments (helical) span residues M1–L21, S47–Y67, G83–F103, and G130–I150.

This sequence belongs to the complex I subunit 6 family.

Its subcellular location is the mitochondrion membrane. The enzyme catalyses a ubiquinone + NADH + 5 H(+)(in) = a ubiquinol + NAD(+) + 4 H(+)(out). In terms of biological role, core subunit of the mitochondrial membrane respiratory chain NADH dehydrogenase (Complex I) that is believed to belong to the minimal assembly required for catalysis. Complex I functions in the transfer of electrons from NADH to the respiratory chain. The immediate electron acceptor for the enzyme is believed to be ubiquinone. The protein is NADH-ubiquinone oxidoreductase chain 6 (ND6) of Strongylocentrotus purpuratus (Purple sea urchin).